Reading from the N-terminus, the 118-residue chain is Altered inheritance of mitochondria protein 26, mitochondrial (118 aa).

3 helical membrane-spanning segments follow: residues 7 to 27 (EHLL…AYFF), 41 to 61 (LAVT…SIPA), and 98 to 118 (FLFC…GLSI).

Its subcellular location is the mitochondrion membrane. Involved in selective mitochondria autophagy (mitophagy). The protein is Altered inheritance of mitochondria protein 26, mitochondrial (AIM26) of Saccharomyces cerevisiae (strain ATCC 204508 / S288c) (Baker's yeast).